Reading from the N-terminus, the 71-residue chain is UPF0346 protein SPP_0954 (71 aa).

The protein belongs to the UPF0346 family.

In Streptococcus pneumoniae (strain P1031), this protein is UPF0346 protein SPP_0954.